Consider the following 932-residue polypeptide: Protein translocase subunit SecA (932 aa).

ATP contacts are provided by residues glutamine 87, glycine 105–threonine 109, and aspartate 515. Residues cysteine 916, cysteine 918, cysteine 927, and histidine 928 each contribute to the Zn(2+) site.

Belongs to the SecA family. As to quaternary structure, monomer and homodimer. Part of the essential Sec protein translocation apparatus which comprises SecA, SecYEG and auxiliary proteins SecDF-YajC and YidC. The cofactor is Zn(2+).

The protein localises to the cell inner membrane. It localises to the cytoplasm. The catalysed reaction is ATP + H2O + cellular proteinSide 1 = ADP + phosphate + cellular proteinSide 2.. Its function is as follows. Part of the Sec protein translocase complex. Interacts with the SecYEG preprotein conducting channel. Has a central role in coupling the hydrolysis of ATP to the transfer of proteins into and across the cell membrane, serving both as a receptor for the preprotein-SecB complex and as an ATP-driven molecular motor driving the stepwise translocation of polypeptide chains across the membrane. In Burkholderia multivorans (strain ATCC 17616 / 249), this protein is Protein translocase subunit SecA.